The chain runs to 312 residues: Malate dehydrogenase (312 aa).

NAD(+) contacts are provided by residues 12–17 (GSGFTG) and Asp-36. Positions 87 and 93 each coordinate substrate. NAD(+) contacts are provided by residues Asn-100 and 123–125 (LTN). Asn-125 serves as a coordination point for substrate. Ser-149 is modified (phosphoserine). Arg-156 lines the substrate pocket. The active-site Proton acceptor is the His-180.

Belongs to the LDH/MDH superfamily. MDH type 3 family.

It carries out the reaction (S)-malate + NAD(+) = oxaloacetate + NADH + H(+). Functionally, catalyzes the reversible oxidation of malate to oxaloacetate. In Oceanobacillus iheyensis (strain DSM 14371 / CIP 107618 / JCM 11309 / KCTC 3954 / HTE831), this protein is Malate dehydrogenase.